A 901-amino-acid chain; its full sequence is Protein translocase subunit SecA (901 aa).

Residues glutamine 87, 105–109 (GEGKT), and aspartate 512 contribute to the ATP site. The interval 859 to 901 (HQDDDSAAAAALAAQTGERKVGRNDPCPCGSGKKYKQCHGRLQ) is disordered. Zn(2+)-binding residues include cysteine 885, cysteine 887, cysteine 896, and histidine 897. Over residues 891–901 (KKYKQCHGRLQ) the composition is skewed to basic residues.

This sequence belongs to the SecA family. Monomer and homodimer. Part of the essential Sec protein translocation apparatus which comprises SecA, SecYEG and auxiliary proteins SecDF-YajC and YidC. It depends on Zn(2+) as a cofactor.

It is found in the cell inner membrane. It localises to the cytoplasm. It catalyses the reaction ATP + H2O + cellular proteinSide 1 = ADP + phosphate + cellular proteinSide 2.. Its function is as follows. Part of the Sec protein translocase complex. Interacts with the SecYEG preprotein conducting channel. Has a central role in coupling the hydrolysis of ATP to the transfer of proteins into and across the cell membrane, serving both as a receptor for the preprotein-SecB complex and as an ATP-driven molecular motor driving the stepwise translocation of polypeptide chains across the membrane. This Escherichia coli O9:H4 (strain HS) protein is Protein translocase subunit SecA.